A 367-amino-acid chain; its full sequence is 3-dehydroquinate synthase (367 aa).

NAD(+) contacts are provided by residues 69-74 (DGEAFK), 103-107 (GVIGD), 127-128 (TT), Lys-140, and Lys-149. Zn(2+) is bound by residues Glu-182, His-245, and His-262.

Belongs to the sugar phosphate cyclases superfamily. Dehydroquinate synthase family. NAD(+) is required as a cofactor. It depends on Co(2+) as a cofactor. Zn(2+) serves as cofactor.

It localises to the cytoplasm. It carries out the reaction 7-phospho-2-dehydro-3-deoxy-D-arabino-heptonate = 3-dehydroquinate + phosphate. It functions in the pathway metabolic intermediate biosynthesis; chorismate biosynthesis; chorismate from D-erythrose 4-phosphate and phosphoenolpyruvate: step 2/7. Its function is as follows. Catalyzes the conversion of 3-deoxy-D-arabino-heptulosonate 7-phosphate (DAHP) to dehydroquinate (DHQ). The protein is 3-dehydroquinate synthase of Pseudomonas syringae pv. tomato (strain ATCC BAA-871 / DC3000).